The primary structure comprises 230 residues: Tol-Pal system protein TolQ (230 aa).

Transmembrane regions (helical) follow at residues 16–36, 139–159, and 171–191; these read LVKL…AIII, YIGL…LGAV, and IAEA…AVMA.

Belongs to the ExbB/TolQ family. As to quaternary structure, the Tol-Pal system is composed of five core proteins: the inner membrane proteins TolA, TolQ and TolR, the periplasmic protein TolB and the outer membrane protein Pal. They form a network linking the inner and outer membranes and the peptidoglycan layer.

The protein resides in the cell inner membrane. Part of the Tol-Pal system, which plays a role in outer membrane invagination during cell division and is important for maintaining outer membrane integrity. Required, with TolR, for the proton motive force-dependent activation of TolA and for TolA-Pal interaction. The protein is Tol-Pal system protein TolQ of Escherichia coli O157:H7.